The primary structure comprises 221 residues: Flagellar L-ring protein 2 (221 aa).

A signal peptide spans Met1–Gly16. Cys17 carries the N-palmitoyl cysteine lipid modification. Cys17 carries the S-diacylglycerol cysteine lipid modification.

Belongs to the FlgH family. The basal body constitutes a major portion of the flagellar organelle and consists of four rings (L,P,S, and M) mounted on a central rod.

It is found in the cell outer membrane. Its subcellular location is the bacterial flagellum basal body. Assembles around the rod to form the L-ring and probably protects the motor/basal body from shearing forces during rotation. This Yersinia pseudotuberculosis serotype I (strain IP32953) protein is Flagellar L-ring protein 2.